Here is a 295-residue protein sequence, read N- to C-terminus: Glutamyl-Q tRNA(Asp) synthetase (295 aa).

Residues 9-13 (RFAPT) and glutamate 45 contribute to the L-glutamate site. The 'HIGH' region signature appears at 12–22 (PTPSGYLHFGS). Residues cysteine 101, cysteine 103, tyrosine 115, and cysteine 119 each coordinate Zn(2+). Residues tyrosine 172 and arginine 190 each contribute to the L-glutamate site. The short motif at 228-232 (KLGKS) is the 'KMSKS' region element. Lysine 231 lines the ATP pocket.

This sequence belongs to the class-I aminoacyl-tRNA synthetase family. GluQ subfamily. It depends on Zn(2+) as a cofactor.

Catalyzes the tRNA-independent activation of glutamate in presence of ATP and the subsequent transfer of glutamate onto a tRNA(Asp). Glutamate is transferred on the 2-amino-5-(4,5-dihydroxy-2-cyclopenten-1-yl) moiety of the queuosine in the wobble position of the QUC anticodon. This Pseudomonas syringae pv. syringae (strain B728a) protein is Glutamyl-Q tRNA(Asp) synthetase.